A 198-amino-acid polypeptide reads, in one-letter code: tRNA (pseudouridine(54)-N(1))-methyltransferase (198 aa).

Residues leucine 134 and glycine 155 each contribute to the S-adenosyl-L-methionine site.

This sequence belongs to the methyltransferase superfamily. TrmY family. In terms of assembly, homodimer.

It is found in the cytoplasm. The enzyme catalyses pseudouridine(54) in tRNA + S-adenosyl-L-methionine = N(1)-methylpseudouridine(54) in tRNA + S-adenosyl-L-homocysteine + H(+). Specifically catalyzes the N1-methylation of pseudouridine at position 54 (Psi54) in tRNAs. The chain is tRNA (pseudouridine(54)-N(1))-methyltransferase from Thermococcus kodakarensis (strain ATCC BAA-918 / JCM 12380 / KOD1) (Pyrococcus kodakaraensis (strain KOD1)).